Consider the following 199-residue polypeptide: Probable thymidylate kinase (199 aa).

ATP is bound at residue 9 to 16 (GIDGCGKT).

This sequence belongs to the thymidylate kinase family.

The catalysed reaction is dTMP + ATP = dTDP + ADP. The chain is Probable thymidylate kinase from Methanococcus maripaludis (strain C6 / ATCC BAA-1332).